Consider the following 294-residue polypeptide: Holothin acyltransferase (294 aa).

An N-acetyltransferase domain is found at 17 to 146 (WTSKPASLEE…SRLVGIHNQQ (130 aa)).

It carries out the reaction marinoloyl-CoA C + holothin = thiomarinol C + CoA. The enzyme catalyses pseudomonoyl-CoA C + holothin = pseudomonic acid C--holothin + CoA. The protein operates within antibiotic biosynthesis. Acyltransferase that catalyzes the formation of pseudomonic acid C-holothin (PAC-holothin), a thiomarinol analog, from pseudomonoyl-CoA C (PAC-CoA) and holothin. Accepts linear CoA substrates of different lengths, including propionyl-, hexanoyl-, octanoyl-, oleoyl- and dodecanoyl-CoA, readily converting all into the corresponding acyl-holothin adducts. In vivo, is probably involved in the biosynthesis of thiomarinol, a naturally occurring double-headed antibiotic. The sequence is that of Holothin acyltransferase from Pseudoalteromonas sp. (strain SANK 73390).